Here is a 119-residue protein sequence, read N- to C-terminus: UPF0342 protein GK0640 (119 aa).

It belongs to the UPF0342 family.

In Geobacillus kaustophilus (strain HTA426), this protein is UPF0342 protein GK0640.